The sequence spans 95 residues: Glutamine synthetase and cystathionine beta-lyase binding protein (95 aa).

Interacts with glutamine synthetase (TTHA1329) and cystathionine beta-lyase (TTHA1620), but proteins do not form a ternary complex.

Functionally, binds to glutamine synthetase and cystathionine beta-lyase. May be utilized for the efficient use of nitrogen in the global nitrogen regulation of T.thermophilus. The chain is Glutamine synthetase and cystathionine beta-lyase binding protein from Thermus thermophilus (strain ATCC 27634 / DSM 579 / HB8).